The sequence spans 406 residues: Argininosuccinate synthase (406 aa).

Residues 13-21 (AYSGGLDTS) and Ala-40 contribute to the ATP site. 2 residues coordinate L-citrulline: Tyr-91 and Ser-96. Gly-121 is a binding site for ATP. 3 residues coordinate L-aspartate: Thr-123, Asn-127, and Asp-128. Residue Asn-127 coordinates L-citrulline. L-citrulline is bound by residues Arg-131, Ser-182, Ser-191, Glu-267, and Tyr-279.

This sequence belongs to the argininosuccinate synthase family. Type 1 subfamily. Homotetramer.

The protein localises to the cytoplasm. The catalysed reaction is L-citrulline + L-aspartate + ATP = 2-(N(omega)-L-arginino)succinate + AMP + diphosphate + H(+). The protein operates within amino-acid biosynthesis; L-arginine biosynthesis; L-arginine from L-ornithine and carbamoyl phosphate: step 2/3. The polypeptide is Argininosuccinate synthase (Brucella suis biovar 1 (strain 1330)).